Consider the following 104-residue polypeptide: Iron-sulfur cluster assembly protein CyaY (104 aa).

It belongs to the frataxin family.

Its function is as follows. Involved in iron-sulfur (Fe-S) cluster assembly. May act as a regulator of Fe-S biogenesis. This Vibrio vulnificus (strain CMCP6) protein is Iron-sulfur cluster assembly protein CyaY.